Reading from the N-terminus, the 632-residue chain is PAN2-PAN3 deadenylation complex subunit PAN3 (632 aa).

Disordered regions lie at residues 1–22 (MQPGEGYHYDSGPNNAVHPHQL) and 99–127 (PTFGPGQHMNHRASHHHQSPQMAQQPPTL). Over residues 107-116 (MNHRASHHHQ) the composition is skewed to basic residues. Residues 117 to 127 (SPQMAQQPPTL) are compositionally biased toward polar residues. A pseudokinase domain region spans residues 223–494 (KADSAIIGDI…TINEIMPMIG (272 aa)). ATP-binding positions include R270, 321 to 328 (DYYPLAGT), and 397 to 398 (NK). The stretch at 495 to 533 (GRFFTVMENMQAKTDVLEAELSREMENGRLFRLVAKMNT) forms a coiled coil. Residues 534-632 (VLERVEHGTD…LLGTNMMLHR (99 aa)) form a knob domain region.

Belongs to the protein kinase superfamily. PAN3 family. In terms of assembly, homodimer. Forms a heterotrimer with a catalytic subunit PAN2 to form the poly(A)-nuclease (PAN) deadenylation complex. Interacts (via PAM-2 motif) with poly(A)-binding protein (via PABC domain), conferring substrate specificity of the enzyme complex. Interacts with the GW182 family protein ain-1. Highly expressed in germ cells.

It localises to the cytoplasm. Its subcellular location is the P-body. In terms of biological role, regulatory subunit of the poly(A)-nuclease (PAN) deadenylation complex, one of two cytoplasmic mRNA deadenylases involved in general and miRNA-mediated mRNA turnover. PAN specifically shortens poly(A) tails of RNA and the activity is stimulated by poly(A)-binding protein (PABP). PAN deadenylation is followed by rapid degradation of the shortened mRNA tails by the CCR4-NOT complex. Deadenylated mRNAs are then degraded by two alternative mechanisms, namely exosome-mediated 3'-5' exonucleolytic degradation, or deadenylation-dependent mRNA decaping and subsequent 5'-3' exonucleolytic degradation by XRN1. PAN3 acts as a positive regulator for PAN activity, recruiting the catalytic subunit PAN2 to mRNA via its interaction with RNA and PABP, and to miRNA targets via its interaction with GW182 family proteins. Within the PAN complex, may positively regulate fertility. The protein is PAN2-PAN3 deadenylation complex subunit PAN3 of Caenorhabditis elegans.